Reading from the N-terminus, the 144-residue chain is Maximins 1/H1 (144 aa).

Residues 1 to 18 (MNFKYIVAVSFLLASAYA) form the signal peptide. A propeptide spanning residues 19–43 (RSEENDEQSLSQRDVLEEESLREIR) is cleaved from the precursor. Asparagine 70 carries the post-translational modification Asparagine amide. The propeptide occupies 74-123 (TAEEHEVMKRLEAVMRDLDSLDYPEEAAERETRSFNQEEIANLFTKKEKR). Position 143 is a leucine amide (leucine 143).

This sequence belongs to the bombinin family. As to expression, expressed by the skin glands.

Its subcellular location is the secreted. Its function is as follows. Antibacterial peptide with amphipathic alpha-helical structure that has activity against both Gram-positive and Gram-negative bacteria. Also shows antimicrobial activity against the fungus C.albicans, but not against A.flavus nor P.uticale. It has little hemolytic activity. It possess a significant cytotoxicity against tumor cell lines, but does not possess a significant anti-HIV activity. Also shows high spermicidal activity. Functionally, antibacterial peptide with activity against both Gram-positive and Gram-negative bacteria. Also shows antimicrobial activity against the fungus C.albicans. In addition, shows strong hemolytic activity. The protein is Maximins 1/H1 of Bombina maxima (Giant fire-bellied toad).